We begin with the raw amino-acid sequence, 175 residues long: Inorganic pyrophosphatase (175 aa).

Residues K30, R44, and Y56 each contribute to the substrate site. Positions 66, 71, and 103 each coordinate Mg(2+). Residue Y142 participates in substrate binding.

Belongs to the PPase family. Homohexamer. The cofactor is Mg(2+).

It localises to the cytoplasm. It catalyses the reaction diphosphate + H2O = 2 phosphate + H(+). In terms of biological role, catalyzes the hydrolysis of inorganic pyrophosphate (PPi) forming two phosphate ions. In Haemophilus ducreyi (strain 35000HP / ATCC 700724), this protein is Inorganic pyrophosphatase.